The following is a 307-amino-acid chain: Fructokinase (307 aa).

This sequence belongs to the carbohydrate kinase PfkB family.

It catalyses the reaction D-fructose + ATP = D-fructose 6-phosphate + ADP + H(+). In terms of biological role, involved in sucrose metabolism. This Klebsiella pneumoniae protein is Fructokinase (scrK).